Consider the following 557-residue polypeptide: (-)-germacrene D synthase (557 aa).

Residues D310, D314, and E462 each coordinate Mg(2+). The DDXXD motif motif lies at 310 to 314 (DDIYD).

It belongs to the terpene synthase family. Tpsa subfamily. It depends on Mg(2+) as a cofactor. Expressed in flowers. Detected in stems, young leaves and tendrils.

It localises to the cytoplasm. The catalysed reaction is (2E,6E)-farnesyl diphosphate + H2O = (1E,4S,5E,7R)-germacra-1(10),5-dien-11-ol + diphosphate. It catalyses the reaction (2E,6E)-farnesyl diphosphate = (-)-germacrene D + diphosphate. Its pathway is secondary metabolite biosynthesis; terpenoid biosynthesis. Involved in the biosynthesis of germacrene D. Can use farnesyl diphosphate as substrate, but not geranyl diphosphate or geranylgeranyl diphosphate. Produces mainly (-)-germacrene D along with gamma-cadinene. This chain is (-)-germacrene D synthase, found in Vitis vinifera (Grape).